Here is a 409-residue protein sequence, read N- to C-terminus: Lissencephaly-1 homolog (409 aa).

Residues 7 to 39 form the LisH domain; it reads QEEELRFAVADYLQSCGYTNALEAFKKDASIPK. Residues 56–81 are a coiled coil; the sequence is SVVRLQKKVMDLELRLNNTTREMNSG. The span at 75-92 shows a compositional bias: polar residues; sequence TREMNSGVPTRNSRSSND. A disordered region spans residues 75 to 105; it reads TREMNSGVPTRNSRSSNDWIPRPPEKHSLSG. 7 WD repeats span residues 105–146, 147–186, 189–228, 231–270, 273–332, 335–374, and 377–409; these read GHRS…RTLR, GHTD…CRMT, GHDH…CVYN, GHRE…CKEE, GHEH…CLFS, GHDN…CSKS, and AHNH…WECR.

This sequence belongs to the WD repeat LIS1/nudF family.

Its subcellular location is the cytoplasm. It is found in the cytoskeleton. It localises to the microtubule organizing center. The protein resides in the centrosome. Positively regulates the activity of the minus-end directed microtubule motor protein dynein. May enhance dynein-mediated microtubule sliding by targeting dynein to the microtubule plus end. Required for several dynein- and microtubule-dependent processes. The polypeptide is Lissencephaly-1 homolog (Trichoplax adhaerens (Trichoplax reptans)).